Consider the following 1589-residue polypeptide: Paternally-expressed gene 3 protein (1589 aa).

Positions 46–128 (HQRFRNLIYV…TLLENYKEMY (83 aa)) constitute an SCAN box domain. 3 disordered regions span residues 128 to 230 (YQPE…ESYQ), 266 to 306 (DGHS…RRGI), and 319 to 349 (KFIKDVSRSSKSGRARESSDRSQRFPRMSDD). Positions 129–142 (QPEDDNNSDVTSDD) are enriched in acidic residues. 4 stretches are compositionally biased toward basic and acidic residues: residues 143-152 (DMTRNRRESS), 161-182 (SGDRDWDRRGRSRDMEPRDRWS), 206-225 (FEMDRDDDRDSRAYESRSQD), and 295-306 (PEAKKSTHRRGI). C2H2-type zinc fingers lie at residues 454-476 (YVCDECGRSFSVISEFVEHQIMH), 507-529 (FECKDCGETFNKSAALAEHRKIH), and 565-587 (YECRVCKETFLHSSALIEHQKIH). Basic and acidic residues predominate over residues 588–607 (FGDDKDNEREHERERERGET). The interval 588-610 (FGDDKDNEREHERERERGETFRP) is disordered. The C2H2-type 4 zinc finger occupies 627 to 649 (YECKVCGETFLHSSSLKEHQKIH). The tract at residues 838-930 (LVASKPPRSH…EFSVPSSNVR (93 aa)) is disordered. Positions 868–881 (LNDKRQKIPARENP) are enriched in basic and acidic residues. A C2H2-type 5 zinc finger spans residues 969–991 (YECQECGECFAHSSDLTEHQKIH). Residues 1056–1104 (EKSHGEESQGENTDGEETHSEETHGQETIEDPVIQSSDMEDPQKDDPDD) are disordered. A compositionally biased stretch (basic and acidic residues) spans 1071–1082 (EETHSEETHGQE). 5 C2H2-type zinc fingers span residues 1107 to 1129 (YECEDCGLGFVDLTDLTDHQKVH), 1163 to 1185 (YECPKCGESFIHSSFLFEHQRIH), 1225 to 1247 (IRCLLCGQGFIHSSALNEHMRLH), 1282 to 1304 (FECAVCGESFVNPAELADHVTVH), and 1332 to 1354 (YECKDCGKSFIHSTVLTKHKELH). Positions 1396–1416 (AEPEVEAAEPEVEAAEPEVEA) are enriched in acidic residues. The tract at residues 1396-1496 (AEPEVEAAEP…GIEDPEEGED (101 aa)) is disordered. Tandem repeats lie at residues 1398–1404 (PEVEAAE), 1405–1411 (PEVEAAE), 1412–1418 (PEVEAAE), 1419–1423 (PNGEA), 1426–1430 (PDGEA), 1433–1437 (PIGEA), and 1440–1444 (PNGEA). Positions 1398-1418 (PEVEAAEPEVEAAEPEVEAAE) are 3 X 7 AA repeat of P-E-V-E-A-A-E. The segment at 1419–1444 (PNGEAEGPDGEAAEPIGEAGQPNGEA) is 4 X 5 AA repeat of P-X-G-E-A. 2 stretches are compositionally biased toward acidic residues: residues 1450-1467 (DADEPDGAGIEDPEERAE) and 1476-1496 (PEGDADEPDGVGIEDPEEGED). C2H2-type zinc fingers lie at residues 1506–1528 (YDCHECTETFTSSTAFGEHLKTH) and 1565–1587 (FKCDVCGQLFNDRLSLARHQNTH).

Belongs to the krueppel C2H2-type zinc-finger protein family. As to quaternary structure, homodimer. Interacts with SIAH1A and SIAH2. Interacts with TRAF2.

Its subcellular location is the nucleus. It localises to the cytoplasm. Induces apoptosis in cooperation with SIAH1A. Acts as a mediator between p53/TP53 and BAX in a neuronal death pathway that is activated by DNA damage. Acts synergistically with TRAF2 and inhibits TNF induced apoptosis through activation of NF-kappa-B. The sequence is that of Paternally-expressed gene 3 protein (PEG3) from Gorilla gorilla gorilla (Western lowland gorilla).